Here is a 353-residue protein sequence, read N- to C-terminus: UPF0283 membrane protein YcjF (353 aa).

The span at 1-19 (MSEPLKPRIDFAEPLKEEP) shows a compositional bias: basic and acidic residues. The disordered stretch occupies residues 1–35 (MSEPLKPRIDFAEPLKEEPTSAFKAQQTFSEAESR). 3 consecutive transmembrane segments (helical) span residues 70 to 90 (MVMG…VQWT), 100 to 120 (VALG…GSVV), and 213 to 233 (ESTL…FIAW).

This sequence belongs to the UPF0283 family.

Its subcellular location is the cell inner membrane. The protein is UPF0283 membrane protein YcjF of Salmonella paratyphi A (strain AKU_12601).